The following is a 750-amino-acid chain: MFTENQNNNQRHALKTEIKTVFNSDSGVTYFSILIETSSKMSLYNVIIKTFITQLQKANRECQIQIITYGDSVNTIFEFDSEPNELKDSLKEIKFSKDNEEAKLGEAMRMCFNNIESNWSSDLMSKIIIISSGQSTDDSSDDLVDILSLDNNSIYGLAGCNLANKSSDEAVKDLQSLLPDQKVIPLGKNPSQDIRLLMNGGGGAANGGGAANGASSSDEHSINCPVNIEVYPHTNETKSIKDDLLLDVVIKPDGNTASVPSGTKIKFLSNKYYSGYTIQLKQNLVFGEPYEETIKLEFKKGQMEKTQFENFPSKIIFHIELANDRDNVHEGFVALNISYFLGELKSKYRCCIGVEGEIGNGKSTCLNGFVNLFNPVGELEEYFNANRTSGTHVTTSINNTSLKEILSAKHYIHPVQESFHDIDIAWSDSWGFVDTDVQLRHKAEGRIHHGTKKDECTILQPDDRYRIDCFIFVVSIRNFTNPASMQRIEKKIKEVLQMNITPLLAITFSDTLSKNQLQDVMKNKVAELSVQESNTFIISNYTEKETHKDISKDVQYLRLLTKAVQLCKVKNEKDIMNKVKGISNLSINDNNNSFNQTPIKNQPFFESSSTSSPSPAFFRSPIQQQQQQTSTTSTQSPSPSSSSASTPPPPSQMLNEQPSKTINVTIDVVTDSSGTVLTSFEIESSTNESVSELKCKLINEIDPEMNANDWSITKESGTVLFESARLSSIIKSFDNSDSIKLVLKKKQKLF.

In terms of domain architecture, VWFA spans 17-249; the sequence is EIKTVFNSDS…IKDDLLLDVV (233 aa). 2 stretches are compositionally biased toward low complexity: residues 586–595 and 603–645; these read SINDNNNSFN and PFFE…SSAS. A disordered region spans residues 586–657; sequence SINDNNNSFN…PPPSQMLNEQ (72 aa).

The polypeptide is von Willebrand factor A domain-containing protein DDB_G0292188 (Dictyostelium discoideum (Social amoeba)).